The following is a 946-amino-acid chain: Bifunctional glutamine synthetase adenylyltransferase/adenylyl-removing enzyme (946 aa).

The adenylyl removase stretch occupies residues 1–440 (MKPLSSPLQQ…VFNELIGDDE (440 aa)). The adenylyl transferase stretch occupies residues 449 to 946 (SEQWRELWQD…ASWQKWLVEE (498 aa)).

Belongs to the GlnE family. Mg(2+) is required as a cofactor.

It catalyses the reaction [glutamine synthetase]-O(4)-(5'-adenylyl)-L-tyrosine + phosphate = [glutamine synthetase]-L-tyrosine + ADP. It carries out the reaction [glutamine synthetase]-L-tyrosine + ATP = [glutamine synthetase]-O(4)-(5'-adenylyl)-L-tyrosine + diphosphate. Involved in the regulation of glutamine synthetase GlnA, a key enzyme in the process to assimilate ammonia. When cellular nitrogen levels are high, the C-terminal adenylyl transferase (AT) inactivates GlnA by covalent transfer of an adenylyl group from ATP to specific tyrosine residue of GlnA, thus reducing its activity. Conversely, when nitrogen levels are low, the N-terminal adenylyl removase (AR) activates GlnA by removing the adenylyl group by phosphorolysis, increasing its activity. The regulatory region of GlnE binds the signal transduction protein PII (GlnB) which indicates the nitrogen status of the cell. The protein is Bifunctional glutamine synthetase adenylyltransferase/adenylyl-removing enzyme of Escherichia coli O6:H1 (strain CFT073 / ATCC 700928 / UPEC).